Reading from the N-terminus, the 263-residue chain is MTHPQPFIAVIPARLASTRLPNKPLADLGGKPMVVRVAERAREAGAQQVLIASDAQSVLDAARDHGFEAVLTRADHPSGTDRLAEVAATFGWSDDTVVVNVQGDEPLIDPVLVRDVASHLAAHPDCAIATAAHPIHDAADVFNPNVVKVALDARNVAMYFSRAPIPWSRDAYLPHWPDVSAMPAPAFPVHRHIGLYAYRARFLRTYPSLAQAPVEQAEQLEQLRAMWHGERIAVLITEHAPEAGIDTPADLARVQALFRPGSK.

Belongs to the KdsB family.

The protein resides in the cytoplasm. It carries out the reaction 3-deoxy-alpha-D-manno-oct-2-ulosonate + CTP = CMP-3-deoxy-beta-D-manno-octulosonate + diphosphate. Its pathway is nucleotide-sugar biosynthesis; CMP-3-deoxy-D-manno-octulosonate biosynthesis; CMP-3-deoxy-D-manno-octulosonate from 3-deoxy-D-manno-octulosonate and CTP: step 1/1. It participates in bacterial outer membrane biogenesis; lipopolysaccharide biosynthesis. In terms of biological role, activates KDO (a required 8-carbon sugar) for incorporation into bacterial lipopolysaccharide in Gram-negative bacteria. The protein is 3-deoxy-manno-octulosonate cytidylyltransferase 1 of Burkholderia ambifaria (strain ATCC BAA-244 / DSM 16087 / CCUG 44356 / LMG 19182 / AMMD) (Burkholderia cepacia (strain AMMD)).